A 327-amino-acid chain; its full sequence is tRNA N6-adenosine threonylcarbamoyltransferase (327 aa).

Fe cation-binding residues include histidine 109 and histidine 113. Substrate-binding positions include 132–136 (MVSGG), aspartate 165, glycine 178, aspartate 182, and asparagine 268. Fe cation is bound at residue aspartate 296.

Belongs to the KAE1 / TsaD family. In terms of assembly, forms a hexamer composed of two TsaB, TsaD and TsaE trimers. Requires Fe(2+) as cofactor.

The protein resides in the cytoplasm. The enzyme catalyses L-threonylcarbamoyladenylate + adenosine(37) in tRNA = N(6)-L-threonylcarbamoyladenosine(37) in tRNA + AMP + H(+). Required for the formation of a threonylcarbamoyl group on adenosine at position 37 (t(6)A37) in tRNAs that read codons beginning with adenine. Is involved in the transfer of the threonylcarbamoyl moiety of threonylcarbamoyl-AMP (TC-AMP) to the N6 group of A37, together with TsaE and TsaB. TsaD likely plays a direct catalytic role in this reaction. This chain is tRNA N6-adenosine threonylcarbamoyltransferase, found in Thermotoga maritima (strain ATCC 43589 / DSM 3109 / JCM 10099 / NBRC 100826 / MSB8).